We begin with the raw amino-acid sequence, 89 residues long: Small ribosomal subunit protein uS14A (89 aa).

It belongs to the universal ribosomal protein uS14 family. Contacts proteins S3 and S10. Part of the 30S ribosomal subunit.

Binds 16S rRNA, required for the assembly of 30S particles and may also be responsible for determining the conformation of the 16S rRNA at the A site. In terms of biological role, non-essential protein. A second form of uS14, it can integrate into the 30S subunit where it partially compensates for loss of the major uS14 protein (AC P12878) in restoring 70S formation, although it does not seem to be incorporated into the ribosome as well as the major uS14. The protein is Small ribosomal subunit protein uS14A of Bacillus subtilis (strain 168).